The primary structure comprises 427 residues: Trigger factor (427 aa).

One can recognise a PPIase FKBP-type domain in the interval 163 to 248 (GDTAVIDFEG…VHEIKAKELP (86 aa)).

It belongs to the FKBP-type PPIase family. Tig subfamily.

Its subcellular location is the cytoplasm. The enzyme catalyses [protein]-peptidylproline (omega=180) = [protein]-peptidylproline (omega=0). Functionally, involved in protein export. Acts as a chaperone by maintaining the newly synthesized protein in an open conformation. Functions as a peptidyl-prolyl cis-trans isomerase. This is Trigger factor from Bacillus cytotoxicus (strain DSM 22905 / CIP 110041 / 391-98 / NVH 391-98).